A 451-amino-acid chain; its full sequence is MQRHAIILAAGKGTRMKSKKYKVLHEVAGKPMVEHVLNNVKQAGVDQIVTIIGHGAESVKDTLGNQSLYSFQDKQLGTAHAVKMAHEHLADKEGTTLVVCGDTPLITYQTLQSLIEHHESTQSHVTVLSASTINPYGYGRIIRNHNGILERIVEEKDANDSERAIKEISSGIFAFNNRVLFEKLEQVKNDNAQGEYYLPDVLSLILKDGGKAEVYCTEDFDEIIGVNDRLMLSEAEKALQQRINRYHMENGVTIIDPSSTFIGTDVKIGIDTTIEPGVRIGGHTTIEEDVWIGQYSEINNSTIHSNANIKQSVINDSIVGENXXVGPFAQLRPGSNLGSEVKVGNFVEVKKADIKDGAKVSHLSYIGDAEIGERTNIGCGSITVNYDGANKFKTIVGKDAFIGCNTNLIAPVTVGNHTLIAAGSTITDNIPEDSLALARARQVNKEGYLKK.

The pyrophosphorylase stretch occupies residues 1 to 229; it reads MQRHAIILAA…FDEIIGVNDR (229 aa). UDP-N-acetyl-alpha-D-glucosamine contacts are provided by residues 8–11, lysine 22, glutamine 72, and 77–78; these read LAAG and GT. Residue aspartate 102 participates in Mg(2+) binding. Positions 139, 154, and 227 each coordinate UDP-N-acetyl-alpha-D-glucosamine. Asparagine 227 is a binding site for Mg(2+). Residues 230–250 form a linker region; that stretch reads LMLSEAEKALQQRINRYHMEN. The N-acetyltransferase stretch occupies residues 251–451; the sequence is GVTIIDPSST…QVNKEGYLKK (201 aa). 2 residues coordinate UDP-N-acetyl-alpha-D-glucosamine: arginine 332 and lysine 350. The Proton acceptor role is filled by histidine 362. UDP-N-acetyl-alpha-D-glucosamine is bound by residues tyrosine 365 and asparagine 376. Residues 385 to 386, alanine 422, and arginine 439 contribute to the acetyl-CoA site; that span reads NY.

In the N-terminal section; belongs to the N-acetylglucosamine-1-phosphate uridyltransferase family. This sequence in the C-terminal section; belongs to the transferase hexapeptide repeat family. As to quaternary structure, homotrimer. Mg(2+) serves as cofactor.

Its subcellular location is the cytoplasm. It catalyses the reaction alpha-D-glucosamine 1-phosphate + acetyl-CoA = N-acetyl-alpha-D-glucosamine 1-phosphate + CoA + H(+). It carries out the reaction N-acetyl-alpha-D-glucosamine 1-phosphate + UTP + H(+) = UDP-N-acetyl-alpha-D-glucosamine + diphosphate. It participates in nucleotide-sugar biosynthesis; UDP-N-acetyl-alpha-D-glucosamine biosynthesis; N-acetyl-alpha-D-glucosamine 1-phosphate from alpha-D-glucosamine 6-phosphate (route II): step 2/2. Its pathway is nucleotide-sugar biosynthesis; UDP-N-acetyl-alpha-D-glucosamine biosynthesis; UDP-N-acetyl-alpha-D-glucosamine from N-acetyl-alpha-D-glucosamine 1-phosphate: step 1/1. It functions in the pathway bacterial outer membrane biogenesis; LPS lipid A biosynthesis. Functionally, catalyzes the last two sequential reactions in the de novo biosynthetic pathway for UDP-N-acetylglucosamine (UDP-GlcNAc). The C-terminal domain catalyzes the transfer of acetyl group from acetyl coenzyme A to glucosamine-1-phosphate (GlcN-1-P) to produce N-acetylglucosamine-1-phosphate (GlcNAc-1-P), which is converted into UDP-GlcNAc by the transfer of uridine 5-monophosphate (from uridine 5-triphosphate), a reaction catalyzed by the N-terminal domain. The protein is Bifunctional protein GlmU of Staphylococcus epidermidis.